The sequence spans 321 residues: Malate dehydrogenase (321 aa).

NAD(+) contacts are provided by residues 10 to 15 and aspartate 34; that span reads GAGQIG. Residues arginine 83 and arginine 89 each contribute to the substrate site. NAD(+)-binding positions include asparagine 96 and 119–121; that span reads ITN. The substrate site is built by asparagine 121 and arginine 152. Histidine 176 functions as the Proton acceptor in the catalytic mechanism.

Belongs to the LDH/MDH superfamily. MDH type 3 family.

The catalysed reaction is (S)-malate + NAD(+) = oxaloacetate + NADH + H(+). In terms of biological role, catalyzes the reversible oxidation of malate to oxaloacetate. This Xanthobacter autotrophicus (strain ATCC BAA-1158 / Py2) protein is Malate dehydrogenase.